The chain runs to 216 residues: Twisted gastrulation protein homolog 1-A (216 aa).

A signal peptide spans 1–25 (MKPSFLHIPAAALLLCSLWILPIYC). 3 N-linked (GlcNAc...) asparagine glycosylation sites follow: Asn-52, Asn-81, and Asn-145.

Belongs to the twisted gastrulation protein family. Binds directly to bmp2, bmp4 and bmp7 and can form a ternary complex with bmps and chordin, thus preventing the binding of bmps to their cell surface receptors. Posterior defects are induced by overexpression. This may arise through alteration of bmp4 or chrd function in the developing tailbud region.

The protein resides in the secreted. Its function is as follows. Involved in dorsal-ventral patterning, permitting peak BMP signaling by antagonizing the residual anti-BMP activity of the cleavage products of chrd. Functions to promote the formation of ventral mesoderm by increasing the activity of bmp7 and other BMPS. Seems to antagonize BMP signaling by forming ternary complexes with chrd and BMPs, thereby preventing BMPs from binding to their receptors. In addition to the anti-BMP function, also has pro-BMP activity, partly mediated by cleavage and degradation of chrd, which releases BMPs from ternary complexes. May be an important modulator of BMP-regulated cartilage development and chondrocyte differentiation. In Xenopus laevis (African clawed frog), this protein is Twisted gastrulation protein homolog 1-A (twsg1-a).